A 209-amino-acid chain; its full sequence is Orotate phosphoribosyltransferase (209 aa).

5-phospho-alpha-D-ribose 1-diphosphate is bound by residues R96, K100, H102, and 122–130; that span reads EDLISTGGS. Position 126 (S126) interacts with orotate.

It belongs to the purine/pyrimidine phosphoribosyltransferase family. PyrE subfamily. Homodimer. Mg(2+) is required as a cofactor.

It catalyses the reaction orotidine 5'-phosphate + diphosphate = orotate + 5-phospho-alpha-D-ribose 1-diphosphate. The protein operates within pyrimidine metabolism; UMP biosynthesis via de novo pathway; UMP from orotate: step 1/2. In terms of biological role, catalyzes the transfer of a ribosyl phosphate group from 5-phosphoribose 1-diphosphate to orotate, leading to the formation of orotidine monophosphate (OMP). The chain is Orotate phosphoribosyltransferase from Cytophaga hutchinsonii (strain ATCC 33406 / DSM 1761 / CIP 103989 / NBRC 15051 / NCIMB 9469 / D465).